The primary structure comprises 377 residues: Cilia- and flagella-associated protein 263 (377 aa).

2 coiled-coil regions span residues 95 to 243 and 280 to 354; these read LTAD…NQEL and LRKE…SLKG.

This sequence belongs to the CFAP263 family. In terms of assembly, forms a complex with CFAP184; the interaction is required for functional activity in cilia. Interacts with HAP1 and PCM1.

The protein resides in the cytoplasm. It is found in the cytoskeleton. It localises to the microtubule organizing center. Its subcellular location is the centrosome. The protein localises to the centriolar satellite. The protein resides in the cell projection. It is found in the cilium. Component of centriolar satellites contributing to primary cilium formation. In complex with CFAP263, acts as a regulator of ciliary beating that connects radial spoke 3 (RS3) to the inner dynein arm (IDA) and the nexin-dynein regulatory complex (N-DRC). The complex is positioned parallel to N-DRC and forms a connection between the arch at the base of RS3, the IDA tail and N-DRC. This chain is Cilia- and flagella-associated protein 263, found in Homo sapiens (Human).